Reading from the N-terminus, the 288-residue chain is Phytanoyl-CoA dioxygenase domain-containing protein 1 homolog (288 aa).

2-oxoglutarate-binding positions include Lys-95, Met-134, 149–151 (HVD), and Trp-167. Fe cation-binding residues include His-149 and Asp-151. His-242 serves as a coordination point for Fe cation. Ser-244 and Arg-253 together coordinate 2-oxoglutarate.

The protein belongs to the PhyH family. PHYHD1 subfamily. Fe cation serves as cofactor.

Its function is as follows. Has alpha-ketoglutarate-dependent dioxygenase activity. Does not show detectable activity towards fatty acid CoA thioesters. Is not expected to be active with phytanoyl CoA. This chain is Phytanoyl-CoA dioxygenase domain-containing protein 1 homolog, found in Caenorhabditis elegans.